The following is a 126-amino-acid chain: Fumarate reductase subunit C (126 aa).

3 helical membrane-spanning segments follow: residues 30-50 (IFVA…GAGG), 64-84 (VVVV…VTWF), and 105-125 (VLAG…WMVL).

Belongs to the FrdC family. In terms of assembly, part of an enzyme complex containing four subunits: a flavoprotein (FrdA), an iron-sulfur protein (FrdB), and two hydrophobic anchor proteins (FrdC and FrdD).

It is found in the cell membrane. In terms of biological role, anchors the catalytic components of the fumarate reductase complex to the cell membrane, binds quinones. This is Fumarate reductase subunit C from Mycobacterium tuberculosis (strain ATCC 25177 / H37Ra).